We begin with the raw amino-acid sequence, 443 residues long: Probable ribonuclease FAU-1 (443 aa).

It belongs to the FAU-1 family.

In terms of biological role, probable RNase involved in rRNA stability through maturation and/or degradation of precursor rRNAs. Binds to RNA in loop regions with AU-rich sequences. The chain is Probable ribonuclease FAU-1 from Pyrobaculum aerophilum (strain ATCC 51768 / DSM 7523 / JCM 9630 / CIP 104966 / NBRC 100827 / IM2).